Here is a 129-residue protein sequence, read N- to C-terminus: Glycine cleavage system H protein (129 aa).

In terms of domain architecture, Lipoyl-binding spans 24–106 (SYTVGITEHA…FGDGWFFRVM (83 aa)). Lys65 carries the post-translational modification N6-lipoyllysine.

The protein belongs to the GcvH family. As to quaternary structure, the glycine cleavage system is composed of four proteins: P, T, L and H. (R)-lipoate is required as a cofactor.

Its function is as follows. The glycine cleavage system catalyzes the degradation of glycine. The H protein shuttles the methylamine group of glycine from the P protein to the T protein. The polypeptide is Glycine cleavage system H protein (Shewanella frigidimarina (strain NCIMB 400)).